The chain runs to 417 residues: MSGFKSDFLRTLSERGFIHQISDESGLDELLAKETVTAYIGFDPTAPSLHAGGLIQIMMLYWLQQTGHKPVALMGGGTGMVGDPSFKDEARKLMTEDTIAENMASIKRVFANYLTFGDGANDALMVNNGEWLRNINYLEFLRDVGRHFSVNRMLSFDSVKLRLDREQSLSFLEFNYMILQAYDFVELNKRYGLRLQMGGSDQWGNIVNGIDLGHRMGTPQLYALTSPLLTTASGQKMGKSLGGAIWLNADMLSAYDFWQYWRNTEDADVERFLKLYTTLPLDEIARLAELGGAEINEAKKILATEVTAMLHGRDAAEEAAETARKTFEDGELSENLPTVGVHKATLNDGIGVLALMVLAELCTTNGEARRHVEGGAVRINDEPVSDPRMVVNAAALNGQGLIKLSLGKKRHVLIRPA.

Y39 contributes to the L-tyrosine binding site. The short motif at 44 to 53 is the 'HIGH' region element; that stretch reads PTAPSLHAGG. L-tyrosine-binding residues include Y176 and Q180. Positions 236–240 match the 'KMSKS' region motif; it reads KMGKS. Residue K239 participates in ATP binding. The S4 RNA-binding domain occupies 350–417; sequence IGVLALMVLA…KKRHVLIRPA (68 aa).

The protein belongs to the class-I aminoacyl-tRNA synthetase family. TyrS type 1 subfamily. In terms of assembly, homodimer.

Its subcellular location is the cytoplasm. The catalysed reaction is tRNA(Tyr) + L-tyrosine + ATP = L-tyrosyl-tRNA(Tyr) + AMP + diphosphate + H(+). In terms of biological role, catalyzes the attachment of tyrosine to tRNA(Tyr) in a two-step reaction: tyrosine is first activated by ATP to form Tyr-AMP and then transferred to the acceptor end of tRNA(Tyr). The protein is Tyrosine--tRNA ligase of Brucella suis biovar 1 (strain 1330).